Reading from the N-terminus, the 84-residue chain is Agaphelin (84 aa).

The N-terminal stretch at 1-26 is a signal peptide; that stretch reads MKMRVHLLAVSVLLVVLALQTTPAEA. The Kazal-like domain occupies 29–82; the sequence is NSEMATCACQLIYRPVCASNNESYSNECVLKCASETPTGRSIGLHKVKDGNCNG. 3 cysteine pairs are disulfide-bonded: Cys-35/Cys-60, Cys-37/Cys-56, and Cys-45/Cys-80. The N-linked (GlcNAc...) asparagine glycan is linked to Asn-49.

Interacts with human ELANE.

The protein localises to the secreted. Functions as a slow and tight inhibitor of host neutrophil elastase (ELANE). Inhibits host proteinase 3 (PRTN3) and chymotrypsin. Does not inhibit other host proteases involved in coagulation or inflammation, such as cathepsin G (CTSG), trypsin, chymase, matriptase, beta-tryptase, kallikrein, urokinase-type plasminogen activator (PLAU), coagulation factors Xa (F10), XIa (F11), XIIa (F12), plasmin (PLG), thrombin (F2) and tissue-type plasminogen activator (PLAT). Inhibits host neutrophil chemotaxis induced by N-formylmethionine-leucyl-phenylalanine (fMLP) in vitro. Inhibits ELANE-mediated potentiation of platelet aggregation induced by CTSG in the host. Does not affect CTSG- or collagen-induced platelet aggregation. Blocks cleavage of tissue factor pathway inhibitor (TFPI) by ELANE in the host. Inhibits neutrophil-induced coagulation in the host by interfering with neutrophil extracellular traps (NET) formation. Exhibits anti-inflammatory activity. Reduces ischemia-induced activation of MAPK and NF-kappa-B pathways in the host. Decreases CCL2 and IL8 production in IL4- or lipopolysaccharide (LPS)-stimulated host epithelial cells. Reduces caspase-3 (CASP3)-dependent apoptosis in damaged host tissues. This chain is Agaphelin, found in Anopheles gambiae (African malaria mosquito).